The sequence spans 104 residues: Astakine (104 aa).

Residues 1–22 form the signal peptide; that stretch reads MKMRGVSVGVLVVAMMSGLAMA. 5 disulfides stabilise this stretch: Cys-25–Cys-38, Cys-32–Cys-50, Cys-37–Cys-76, Cys-60–Cys-84, and Cys-78–Cys-91.

This sequence belongs to the AVIT (prokineticin) family.

The protein resides in the secreted. Cytokine directly involved in hematopoiesis. This Pacifastacus leniusculus (Signal crayfish) protein is Astakine.